Here is a 365-residue protein sequence, read N- to C-terminus: Ribosomal RNA large subunit methyltransferase F (365 aa).

Composition is skewed to low complexity over residues 1 to 18 and 30 to 42; these read MPKP…SPAG and AKLK…AASK. The disordered stretch occupies residues 1–50; sequence MPKPAIKTAAKPATSPAGKRAKPNTPQSVAKLKASTAKAASKPKAKLGEK.

The protein belongs to the methyltransferase superfamily. METTL16/RlmF family.

The protein resides in the cytoplasm. It catalyses the reaction adenosine(1618) in 23S rRNA + S-adenosyl-L-methionine = N(6)-methyladenosine(1618) in 23S rRNA + S-adenosyl-L-homocysteine + H(+). Specifically methylates the adenine in position 1618 of 23S rRNA. The polypeptide is Ribosomal RNA large subunit methyltransferase F (Shewanella oneidensis (strain ATCC 700550 / JCM 31522 / CIP 106686 / LMG 19005 / NCIMB 14063 / MR-1)).